The following is a 419-amino-acid chain: MDLTVEKSGNLEGTVKAPPSKSYTHRAVIIAALAEGVSEIRDPLIAEDTLSSLNACRAFGIRVDEGDAWTVHGSGGELETPDDVIYLGNSGTTLRLMTSVAGLAENYTVLTGDESLRTRPMQPLLDALRPLGVEALSSRMNGLPPIIVRGGLRGGSTSIRGDVSSQFISSILIAAPLTEGVEVMVEGDFISRPYVDMTVDVMERFSVPVDYSEGTFRVEPAVYRGLDYTVEGDYSSASYLAGAVAAAGGDVLIENLFRDSRQGDRIILDIISDMGAEVRRGEDHVRIASTGELSGVSVNLHDAPDLLPTVAVLGALATGRTEIGGVEHARYKETDRISTCAAELRRLGVDVTELPDGMIIEGGASGGTVWSHGDHRLAMAFTLIGLREGITIRDAEVFSVSFPDFPERMMQIGCRMNLS.

Lys21, Ser22, and Arg26 together coordinate 3-phosphoshikimate. Lys21 contributes to the phosphoenolpyruvate binding site. Phosphoenolpyruvate-binding residues include Gly91 and Arg119. 6 residues coordinate 3-phosphoshikimate: Ser164, Ser165, Gln166, Ser191, Asp305, and Lys332. Residue Gln166 coordinates phosphoenolpyruvate. Asp305 functions as the Proton acceptor in the catalytic mechanism. Residues Arg336 and Arg376 each contribute to the phosphoenolpyruvate site.

The protein belongs to the EPSP synthase family. As to quaternary structure, monomer.

The protein resides in the cytoplasm. It carries out the reaction 3-phosphoshikimate + phosphoenolpyruvate = 5-O-(1-carboxyvinyl)-3-phosphoshikimate + phosphate. It functions in the pathway metabolic intermediate biosynthesis; chorismate biosynthesis. In terms of biological role, catalyzes the transfer of the enolpyruvyl moiety of phosphoenolpyruvate (PEP) to the 5-hydroxyl of shikimate-3-phosphate (S3P) to produce enolpyruvyl shikimate-3-phosphate and inorganic phosphate. In Methanothermobacter thermautotrophicus (strain ATCC 29096 / DSM 1053 / JCM 10044 / NBRC 100330 / Delta H) (Methanobacterium thermoautotrophicum), this protein is 3-phosphoshikimate 1-carboxyvinyltransferase.